A 269-amino-acid polypeptide reads, in one-letter code: G-protein coupled receptor homolog C3 (269 aa).

Cysteines 28 and 107 form a disulfide. The next 5 helical transmembrane spans lie at 30–50 (IMSV…TLMS), 71–91 (IGIL…SPVS), 123–143 (LMQI…FVYC), 165–185 (IVLM…IVLM), and 200–220 (HLCL…ISLA).

It belongs to the G-protein coupled receptor 1 family.

Its subcellular location is the host cell membrane. The chain is G-protein coupled receptor homolog C3 from Sus scrofa (Pig).